Reading from the N-terminus, the 293-residue chain is Phosphatidylserine decarboxylase proenzyme (293 aa).

Active-site charge relay system; for autoendoproteolytic cleavage activity residues include D90, H147, and S254. S254 (schiff-base intermediate with substrate; via pyruvic acid; for decarboxylase activity) is an active-site residue. A Pyruvic acid (Ser); by autocatalysis modification is found at S254.

Belongs to the phosphatidylserine decarboxylase family. PSD-B subfamily. Prokaryotic type I sub-subfamily. Heterodimer of a large membrane-associated beta subunit and a small pyruvoyl-containing alpha subunit. The cofactor is pyruvate. Post-translationally, is synthesized initially as an inactive proenzyme. Formation of the active enzyme involves a self-maturation process in which the active site pyruvoyl group is generated from an internal serine residue via an autocatalytic post-translational modification. Two non-identical subunits are generated from the proenzyme in this reaction, and the pyruvate is formed at the N-terminus of the alpha chain, which is derived from the carboxyl end of the proenzyme. The autoendoproteolytic cleavage occurs by a canonical serine protease mechanism, in which the side chain hydroxyl group of the serine supplies its oxygen atom to form the C-terminus of the beta chain, while the remainder of the serine residue undergoes an oxidative deamination to produce ammonia and the pyruvoyl prosthetic group on the alpha chain. During this reaction, the Ser that is part of the protease active site of the proenzyme becomes the pyruvoyl prosthetic group, which constitutes an essential element of the active site of the mature decarboxylase.

The protein resides in the cell membrane. It carries out the reaction a 1,2-diacyl-sn-glycero-3-phospho-L-serine + H(+) = a 1,2-diacyl-sn-glycero-3-phosphoethanolamine + CO2. It participates in phospholipid metabolism; phosphatidylethanolamine biosynthesis; phosphatidylethanolamine from CDP-diacylglycerol: step 2/2. In terms of biological role, catalyzes the formation of phosphatidylethanolamine (PtdEtn) from phosphatidylserine (PtdSer). This chain is Phosphatidylserine decarboxylase proenzyme, found in Yersinia enterocolitica serotype O:8 / biotype 1B (strain NCTC 13174 / 8081).